The sequence spans 134 residues: Large ribosomal subunit protein eL32 (134 aa).

Belongs to the eukaryotic ribosomal protein eL32 family.

The polypeptide is Large ribosomal subunit protein eL32 (RPL32) (Tetrahymena thermophila (strain SB210)).